The sequence spans 384 residues: tRNA 2-selenouridine synthase (384 aa).

The 124-residue stretch at 15–138 folds into the Rhodanese domain; it reads FVAGKPLIDL…MRQYLIGVIE (124 aa). The S-selanylcysteine intermediate role is filled by Cys-98.

Belongs to the SelU family. In terms of assembly, monomer.

The enzyme catalyses 5-methylaminomethyl-2-thiouridine(34) in tRNA + selenophosphate + (2E)-geranyl diphosphate + H2O + H(+) = 5-methylaminomethyl-2-selenouridine(34) in tRNA + (2E)-thiogeraniol + phosphate + diphosphate. The catalysed reaction is 5-methylaminomethyl-2-thiouridine(34) in tRNA + (2E)-geranyl diphosphate = 5-methylaminomethyl-S-(2E)-geranyl-thiouridine(34) in tRNA + diphosphate. It catalyses the reaction 5-methylaminomethyl-S-(2E)-geranyl-thiouridine(34) in tRNA + selenophosphate + H(+) = 5-methylaminomethyl-2-(Se-phospho)selenouridine(34) in tRNA + (2E)-thiogeraniol. It carries out the reaction 5-methylaminomethyl-2-(Se-phospho)selenouridine(34) in tRNA + H2O = 5-methylaminomethyl-2-selenouridine(34) in tRNA + phosphate. Involved in the post-transcriptional modification of the uridine at the wobble position (U34) of tRNA(Lys), tRNA(Glu) and tRNA(Gln). Catalyzes the conversion of 2-thiouridine (S2U-RNA) to 2-selenouridine (Se2U-RNA). Acts in a two-step process involving geranylation of 2-thiouridine (S2U) to S-geranyl-2-thiouridine (geS2U) and subsequent selenation of the latter derivative to 2-selenouridine (Se2U) in the tRNA chain. The sequence is that of tRNA 2-selenouridine synthase from Shewanella sp. (strain MR-4).